Reading from the N-terminus, the 293-residue chain is Phosphate import ATP-binding protein PstB (293 aa).

The 243-residue stretch at 46-288 folds into the ABC transporter domain; the sequence is FGIRGVDVFY…PDHELTEAYI (243 aa). 78–85 contacts ATP; sequence GPSGCGKS.

Belongs to the ABC transporter superfamily. Phosphate importer (TC 3.A.1.7) family. In terms of assembly, the complex is composed of two ATP-binding proteins (PstB), two transmembrane proteins (PstC and PstA) and a solute-binding protein (PstS).

Its subcellular location is the cell inner membrane. It carries out the reaction phosphate(out) + ATP + H2O = ADP + 2 phosphate(in) + H(+). Part of the ABC transporter complex PstSACB involved in phosphate import. Responsible for energy coupling to the transport system. In Saccharophagus degradans (strain 2-40 / ATCC 43961 / DSM 17024), this protein is Phosphate import ATP-binding protein PstB.